The primary structure comprises 238 residues: Ribonuclease PH (238 aa).

Phosphate is bound by residues Arg86 and 124–126 (GTR).

It belongs to the RNase PH family. As to quaternary structure, homohexameric ring arranged as a trimer of dimers.

It carries out the reaction tRNA(n+1) + phosphate = tRNA(n) + a ribonucleoside 5'-diphosphate. Phosphorolytic 3'-5' exoribonuclease that plays an important role in tRNA 3'-end maturation. Removes nucleotide residues following the 3'-CCA terminus of tRNAs; can also add nucleotides to the ends of RNA molecules by using nucleoside diphosphates as substrates, but this may not be physiologically important. Probably plays a role in initiation of 16S rRNA degradation (leading to ribosome degradation) during starvation. The chain is Ribonuclease PH from Geotalea uraniireducens (strain Rf4) (Geobacter uraniireducens).